A 396-amino-acid polypeptide reads, in one-letter code: Ribosomal RNA large subunit methyltransferase I (396 aa).

A PUA domain is found at 2–81 (TVRLILAKGR…EVIDCAFFIR (80 aa)).

It belongs to the methyltransferase superfamily. RlmI family.

The protein resides in the cytoplasm. It carries out the reaction cytidine(1962) in 23S rRNA + S-adenosyl-L-methionine = 5-methylcytidine(1962) in 23S rRNA + S-adenosyl-L-homocysteine + H(+). Functionally, specifically methylates the cytosine at position 1962 (m5C1962) of 23S rRNA. The polypeptide is Ribosomal RNA large subunit methyltransferase I (Yersinia pestis bv. Antiqua (strain Antiqua)).